A 115-amino-acid polypeptide reads, in one-letter code: Pro-neuregulin-4, membrane-bound isoform (115 aa).

Residues 1–62 (MPTDHEQPCG…SSIPSESNLS (62 aa)) are Extracellular-facing. The EGF-like domain maps to 5–46 (HEQPCGPRHRSFCLNGGICYVIPTIPSPFCRCIENYTGARCE). Cystine bridges form between cysteine 9–cysteine 23, cysteine 17–cysteine 34, and cysteine 36–cysteine 45. Residues asparagine 39 and asparagine 60 are each glycosylated (N-linked (GlcNAc...) asparagine). The chain crosses the membrane as a helical span at residues 63-83 (AAFVVLAVLLTLTIAALCFLC). Over 84–115 (RKGHLQRASSVQCEISLVETNNTRTRHSHREH) the chain is Cytoplasmic.

It belongs to the neuregulin family. As to quaternary structure, interacts with ERBB4. In terms of processing, proteolytic cleavage close to the plasma membrane on the external face leads to the release of the soluble growth factor form. Post-translationally, extensive glycosylation precedes the proteolytic cleavage. As to expression, highly expressed in pancreas; weakly expressed in muscle.

It is found in the cell membrane. Its subcellular location is the secreted. In terms of biological role, low affinity ligand for the ERBB4 tyrosine kinase receptor. Concomitantly recruits ERBB1 and ERBB2 coreceptors, resulting in ligand-stimulated tyrosine phosphorylation and activation of the ERBB receptors. Does not bind to the ERBB1, ERBB2 and ERBB3 receptors. The sequence is that of Pro-neuregulin-4, membrane-bound isoform (Nrg4) from Mus musculus (Mouse).